We begin with the raw amino-acid sequence, 59 residues long: MATIKVKQTKSAIGRLPKHKATLKGLGLRKINHVRELEDTPAVRGMINRVHYMVEIVEE.

Belongs to the universal ribosomal protein uL30 family. As to quaternary structure, part of the 50S ribosomal subunit.

The protein is Large ribosomal subunit protein uL30 of Alteromonas mediterranea (strain DSM 17117 / CIP 110805 / LMG 28347 / Deep ecotype).